Consider the following 310-residue polypeptide: AMMECR1-like protein (310 aa).

The segment at 26-95 is disordered; sequence LSGSGTHSHG…LSPLPRPNGT (70 aa). A compositionally biased stretch (polar residues) spans 28–66; that stretch reads GSGTHSHGNQSTTVPGSSSGPLQNHQHVDSSSGRENVSD. Phosphoserine is present on Ser74. Residues 97–291 enclose the AMMECR1 domain; sequence NTTKNLVVTA…ISYAEYIASR (195 aa).

This is AMMECR1-like protein (AMMECR1L) from Homo sapiens (Human).